The following is a 194-amino-acid chain: DNA replication complex GINS protein PSF3 (194 aa).

It belongs to the GINS3/PSF3 family. In terms of assembly, component of the GINS complex which is a heterotetramer of SLD5, PSF1, PSF2 and PSF3.

It is found in the nucleus. Functions as part of the GINS complex which plays an essential role in the initiation of DNA replication by binding to DNA replication origins and facilitating the assembly of the DNA replication machinery. The protein is DNA replication complex GINS protein PSF3 of Saccharomyces cerevisiae (strain ATCC 204508 / S288c) (Baker's yeast).